A 664-amino-acid chain; its full sequence is Lysophospholipase 1 (664 aa).

A signal peptide spans Met1–Ala22. 19 N-linked (GlcNAc...) asparagine glycosylation sites follow: Asn26, Asn33, Asn52, Asn78, Asn92, Asn123, Asn160, Asn170, Asn215, Asn277, Asn307, Asn345, Asn388, Asn459, Asn489, Asn513, Asn541, Asn565, and Asn582. The PLA2c domain occupies Thr35 to Asp586. A lipid anchor (GPI-anchor amidated asparagine) is attached at Asn634. Positions Ala635–Ile664 are cleaved as a propeptide — removed in mature form.

Belongs to the lysophospholipase family.

The protein resides in the cell membrane. It carries out the reaction a 1-acyl-sn-glycero-3-phosphocholine + H2O = sn-glycerol 3-phosphocholine + a fatty acid + H(+). It catalyses the reaction a 1-acyl-sn-glycero-3-phospho-(1D-myo-inositol) + H2O = sn-glycero-3-phospho-1D-myo-inositol + a fatty acid + H(+). The catalysed reaction is a 1-acyl-sn-glycero-3-phospho-L-serine + H2O = sn-glycero-3-phospho-L-serine + a fatty acid + H(+). The enzyme catalyses a 1,2-diacyl-sn-glycero-3-phospho-(1D-myo-inositol) + 2 H2O = sn-glycero-3-phospho-1D-myo-inositol + 2 a carboxylate + 2 H(+). It carries out the reaction a 1,2-diacyl-sn-glycero-3-phospho-L-serine + 2 H2O = sn-glycero-3-phospho-L-serine + 2 a carboxylate + 2 H(+). It catalyses the reaction 2 1-hexadecanoyl-sn-glycero-3-phosphocholine = 1,2-dihexadecanoyl-sn-glycero-3-phosphocholine + sn-glycerol 3-phosphocholine. The catalysed reaction is 1-hexadecanoyl-sn-glycero-3-phosphocholine + H2O = sn-glycerol 3-phosphocholine + hexadecanoate + H(+). The enzyme catalyses 1,2-dihexadecanoyl-sn-glycero-3-phosphocholine + H2O = 1-hexadecanoyl-sn-glycero-3-phosphocholine + hexadecanoate + H(+). In terms of biological role, sequentially removes both fatty acyl groups from diacylglycerophospholipids and therefore has both phospholipase B and lysophospholipase activities. It also displays transacylase activity. Substrate preference is phosphatidylserine &gt; phosphatidylinositol &gt;&gt; phosphatidylcholine &gt; phosphatidylethanolamine. The substrate specificity is pH- and ion-dependent. In contrast with activities observed at optimum pH 3.5, the order of substrate preference at pH 5.5 is phosphatidylcholine = phosphatidylethanolamine &gt;&gt; phosphatidylinositol. Degrades predominantly phosphatidylcholine and to some extent phosphatidylinositol in vivo. This is Lysophospholipase 1 from Saccharomyces cerevisiae (strain ATCC 204508 / S288c) (Baker's yeast).